Consider the following 182-residue polypeptide: Putative pre-16S rRNA nuclease (182 aa).

Belongs to the YqgF nuclease family.

The protein resides in the cytoplasm. In terms of biological role, could be a nuclease involved in processing of the 5'-end of pre-16S rRNA. In Corynebacterium aurimucosum (strain ATCC 700975 / DSM 44827 / CIP 107346 / CN-1) (Corynebacterium nigricans), this protein is Putative pre-16S rRNA nuclease.